The primary structure comprises 242 residues: Glucosamine-6-phosphate deaminase (242 aa).

Aspartate 67 acts as the Proton acceptor; for enolization step in catalysis. The active-site For ring-opening step is the asparagine 137. Histidine 139 acts as the Proton acceptor; for ring-opening step in catalysis. The For ring-opening step role is filled by glutamate 144.

This sequence belongs to the glucosamine/galactosamine-6-phosphate isomerase family. NagB subfamily.

It carries out the reaction alpha-D-glucosamine 6-phosphate + H2O = beta-D-fructose 6-phosphate + NH4(+). Its pathway is amino-sugar metabolism; N-acetylneuraminate degradation; D-fructose 6-phosphate from N-acetylneuraminate: step 5/5. Functionally, catalyzes the reversible isomerization-deamination of glucosamine 6-phosphate (GlcN6P) to form fructose 6-phosphate (Fru6P) and ammonium ion. This Staphylococcus haemolyticus (strain JCSC1435) protein is Glucosamine-6-phosphate deaminase.